Here is a 174-residue protein sequence, read N- to C-terminus: NADH-quinone oxidoreductase subunit I (174 aa).

2 4Fe-4S ferredoxin-type domains span residues 61–91 and 103–132; these read LTVK…ITAA and ISYE…LGPE. [4Fe-4S] cluster is bound by residues cysteine 71, cysteine 74, cysteine 77, cysteine 81, cysteine 112, cysteine 115, cysteine 118, and cysteine 122.

The protein belongs to the complex I 23 kDa subunit family. In terms of assembly, NDH-1 is composed of 14 different subunits. Subunits NuoA, H, J, K, L, M, N constitute the membrane sector of the complex. It depends on [4Fe-4S] cluster as a cofactor.

It is found in the cell inner membrane. It carries out the reaction a quinone + NADH + 5 H(+)(in) = a quinol + NAD(+) + 4 H(+)(out). Its function is as follows. NDH-1 shuttles electrons from NADH, via FMN and iron-sulfur (Fe-S) centers, to quinones in the respiratory chain. The immediate electron acceptor for the enzyme in this species is believed to be ubiquinone. Couples the redox reaction to proton translocation (for every two electrons transferred, four hydrogen ions are translocated across the cytoplasmic membrane), and thus conserves the redox energy in a proton gradient. The protein is NADH-quinone oxidoreductase subunit I of Bdellovibrio bacteriovorus (strain ATCC 15356 / DSM 50701 / NCIMB 9529 / HD100).